The following is a 563-amino-acid chain: Pyruvate decarboxylase (563 aa).

Pyruvate is bound by residues Asp28 and His115. Residues Thr390 and 413 to 415 contribute to the thiamine diphosphate site; that span reads GSI. Asp444 contacts Mg(2+). Thiamine diphosphate-binding positions include 445 to 446 and 471 to 476; these read GS and NDGYTI. Residues Asn471 and Gly473 each coordinate Mg(2+). Residue Glu477 coordinates pyruvate.

Belongs to the TPP enzyme family. In terms of assembly, homotetramer. The cofactor is Mg(2+). It depends on thiamine diphosphate as a cofactor.

It carries out the reaction a 2-oxocarboxylate + H(+) = an aldehyde + CO2. It catalyses the reaction pyruvate + H(+) = acetaldehyde + CO2. This Kluyveromyces lactis (strain ATCC 8585 / CBS 2359 / DSM 70799 / NBRC 1267 / NRRL Y-1140 / WM37) (Yeast) protein is Pyruvate decarboxylase (PDC1).